Here is an 877-residue protein sequence, read N- to C-terminus: Phosphoenolpyruvate carboxylase (877 aa).

Active-site residues include His138 and Lys544.

It belongs to the PEPCase type 1 family. Mg(2+) is required as a cofactor.

The enzyme catalyses oxaloacetate + phosphate = phosphoenolpyruvate + hydrogencarbonate. Its function is as follows. Forms oxaloacetate, a four-carbon dicarboxylic acid source for the tricarboxylic acid cycle. This Vibrio vulnificus (strain YJ016) protein is Phosphoenolpyruvate carboxylase.